We begin with the raw amino-acid sequence, 63 residues long: Hyphancin-3F (63 aa).

An N-terminal signal peptide occupies residues methionine 1–alanine 22. The propeptide at alanine 23–proline 26 is removed by a dipeptidylpeptidase. Leucine 61 carries the leucine amide modification.

This sequence belongs to the cecropin family.

Its subcellular location is the secreted. Its function is as follows. Has antibacterial activity. This is Hyphancin-3F from Hyphantria cunea (Fall webworm moth).